Here is a 514-residue protein sequence, read N- to C-terminus: Ammonium transporter 1 member 2 (514 aa).

The next 11 helical transmembrane spans lie at 56–76, 91–111, 140–160, 165–185, 212–232, 257–277, 291–313, 328–348, 351–371, 380–400, and 431–451; these read LLFS…LCAG, VLDA…FAFG, FFLY…GSIA, FVAY…TVSH, FAGS…GALV, VVLG…GSFL, GQWS…AALT, IDVC…CAVV, WAAI…NLLA, LEAA…TGLF, and IVQI…LFYG. Thr472 is subject to Phosphothreonine.

It belongs to the ammonia transporter channel (TC 1.A.11.2) family. High expression in root.

Its subcellular location is the membrane. Functionally, ammonium transporter probably involved in ammonium uptake from the soil. This Arabidopsis thaliana (Mouse-ear cress) protein is Ammonium transporter 1 member 2 (AMT1-2).